Consider the following 128-residue polypeptide: Large ribosomal subunit protein eL22 (128 aa).

The residue at position 62 (Thr62) is a Phosphothreonine. Ser66 carries the post-translational modification Phosphoserine. Residue Lys69 is modified to N6-succinyllysine.

The protein belongs to the eukaryotic ribosomal protein eL22 family. In terms of assembly, component of the large ribosomal subunit.

The protein localises to the cytoplasm. Its function is as follows. Component of the large ribosomal subunit. The ribosome is a large ribonucleoprotein complex responsible for the synthesis of proteins in the cell. This chain is Large ribosomal subunit protein eL22 (Rpl22), found in Rattus norvegicus (Rat).